A 101-amino-acid chain; its full sequence is NAD(P)H-quinone oxidoreductase subunit 4L, chloroplastic (101 aa).

The next 3 helical transmembrane spans lie at 2–22, 32–52, and 61–81; these read IFEH…YGLI, MCLE…SDFF, and IFSI…PAIV.

This sequence belongs to the complex I subunit 4L family. As to quaternary structure, NDH is composed of at least 16 different subunits, 5 of which are encoded in the nucleus.

The protein localises to the plastid. It localises to the chloroplast thylakoid membrane. It catalyses the reaction a plastoquinone + NADH + (n+1) H(+)(in) = a plastoquinol + NAD(+) + n H(+)(out). The catalysed reaction is a plastoquinone + NADPH + (n+1) H(+)(in) = a plastoquinol + NADP(+) + n H(+)(out). NDH shuttles electrons from NAD(P)H:plastoquinone, via FMN and iron-sulfur (Fe-S) centers, to quinones in the photosynthetic chain and possibly in a chloroplast respiratory chain. The immediate electron acceptor for the enzyme in this species is believed to be plastoquinone. Couples the redox reaction to proton translocation, and thus conserves the redox energy in a proton gradient. This Phaseolus vulgaris (Kidney bean) protein is NAD(P)H-quinone oxidoreductase subunit 4L, chloroplastic.